A 402-amino-acid polypeptide reads, in one-letter code: tRNA(Met) cytidine acetate ligase (402 aa).

ATP is bound by residues 7-20 (ITEY…HELH), Gly102, Asn171, and Arg196.

It belongs to the TmcAL family.

It localises to the cytoplasm. It catalyses the reaction cytidine(34) in elongator tRNA(Met) + acetate + ATP = N(4)-acetylcytidine(34) in elongator tRNA(Met) + AMP + diphosphate. Functionally, catalyzes the formation of N(4)-acetylcytidine (ac(4)C) at the wobble position of elongator tRNA(Met), using acetate and ATP as substrates. First activates an acetate ion to form acetyladenylate (Ac-AMP) and then transfers the acetyl group to tRNA to form ac(4)C34. This chain is tRNA(Met) cytidine acetate ligase, found in Clostridium perfringens (strain ATCC 13124 / DSM 756 / JCM 1290 / NCIMB 6125 / NCTC 8237 / Type A).